A 397-amino-acid polypeptide reads, in one-letter code: Probable sugar efflux transporter (397 aa).

Helical transmembrane passes span 15–35, 51–71, 80–100, 103–123, 137–157, 169–189, 209–229, 246–266, 277–297, 299–319, 333–353, and 365–385; these read VIVM…PVAL, GLMI…CMLM, LLIS…FAWN, VLLI…SITA, QALG…LPLG, TFTL…RLLP, PMLI…FTAY, KATA…VLFS, LLSS…VSGI, GAIF…SLAM, VATA…ALIG, and IGYV…LMFL.

Belongs to the major facilitator superfamily. SotB (TC 2.A.1.2) family.

Its subcellular location is the cell inner membrane. Its function is as follows. Involved in the efflux of sugars. The physiological role may be the reduction of the intracellular concentration of toxic sugars or sugar metabolites. In Mannheimia succiniciproducens (strain KCTC 0769BP / MBEL55E), this protein is Probable sugar efflux transporter.